The primary structure comprises 183 residues: Thioredoxin-like protein CITRX, chloroplastic (183 aa).

A chloroplast-targeting transit peptide spans methionine 1–serine 81. Residues alanine 82–methionine 183 enclose the Thioredoxin domain. Catalysis depends on nucleophile residues cysteine 106 and cysteine 109. Cysteines 106 and 109 form a disulfide.

This sequence belongs to the thioredoxin family. Plant CITRX-type subfamily. In terms of assembly, interacts with FLN1 and FLN2. Interacts with MRL7.

The protein localises to the plastid. The protein resides in the chloroplast. Functionally, thiol-disulfide oxidoreductase that plays a role in proper chloroplast development, most likely through regulating plastid-encoded polymerase (PEP) dependent chloroplast transcription. Acts as a component of the transcriptionally active plastid chromosome that is required for plastid gene expression. The chain is Thioredoxin-like protein CITRX, chloroplastic from Arabidopsis thaliana (Mouse-ear cress).